The primary structure comprises 485 residues: Glutamyl-tRNA(Gln) amidotransferase subunit A (485 aa).

Active-site charge relay system residues include Lys-78 and Ser-153. Ser-177 functions as the Acyl-ester intermediate in the catalytic mechanism.

This sequence belongs to the amidase family. GatA subfamily. In terms of assembly, heterotrimer of A, B and C subunits.

It catalyses the reaction L-glutamyl-tRNA(Gln) + L-glutamine + ATP + H2O = L-glutaminyl-tRNA(Gln) + L-glutamate + ADP + phosphate + H(+). Allows the formation of correctly charged Gln-tRNA(Gln) through the transamidation of misacylated Glu-tRNA(Gln) in organisms which lack glutaminyl-tRNA synthetase. The reaction takes place in the presence of glutamine and ATP through an activated gamma-phospho-Glu-tRNA(Gln). This Geobacter sp. (strain M21) protein is Glutamyl-tRNA(Gln) amidotransferase subunit A.